The following is a 103-amino-acid chain: Large ribosomal subunit protein bL21 (103 aa).

This sequence belongs to the bacterial ribosomal protein bL21 family. As to quaternary structure, part of the 50S ribosomal subunit. Contacts protein L20.

This protein binds to 23S rRNA in the presence of protein L20. This is Large ribosomal subunit protein bL21 from Actinobacillus succinogenes (strain ATCC 55618 / DSM 22257 / CCUG 43843 / 130Z).